The chain runs to 147 residues: uncharacterized protein (147 aa).

A run of 2 helical transmembrane segments spans residues Tyr-4 to Gly-26 and Tyr-123 to Phe-145.

The protein resides in the cell membrane. This is an uncharacterized protein from Treponema pallidum (strain Nichols).